Consider the following 218-residue polypeptide: DNA-directed RNA polymerase III subunit RPC7-like (218 aa).

Residues 130–218 (TIILPKRPPK…SDDNMDEAIY (89 aa)) are disordered. The segment covering 139–160 (KSTDDKEETIQKLETLEKKEEE) has biased composition (basic and acidic residues). 2 stretches are compositionally biased toward acidic residues: residues 161–193 (VTSEEDEEKEEEEEKEEGEEEEYDEEEHEEETD) and 201–218 (NGEDFGGDSDDNMDEAIY).

This sequence belongs to the eukaryotic RPC7 RNA polymerase subunit family. As to quaternary structure, component of the RNA polymerase III (Pol III) complex consisting of 17 subunits. Pol III exists as two alternative complexes defined by the mutually exclusive incorporation of subunit POLR3G/RPC7alpha or POLR3GL/RPC7beta. Found in a trimeric complex with POLR3C/RPC3 and POLR3F/RPC6. Directly interacts with POLR3C. As to expression, expressed in the liver.

Its subcellular location is the nucleus. DNA-dependent RNA polymerase catalyzes the transcription of DNA into RNA using the four ribonucleoside triphosphates as substrates. Specific peripheric component of RNA polymerase III which synthesizes small RNAs, such as 5S rRNA and tRNAs. This Mus musculus (Mouse) protein is DNA-directed RNA polymerase III subunit RPC7-like.